Consider the following 831-residue polypeptide: MKVSRRDFIKQTAIAATASVAGIPLGTEAANFVTDSEVTKLKWSKAPCRFCGTGCGVTVAVRDNKVVATQGDPQCEVNKGLNCVKGYFLSKIMYGQDRLTKPLLRMKNGKYDKNGEFAPVTWDQAFDEMERQFKRVLKEKGPTAVGMFGSGQWTVWEGYAASKLYKAGFRSNNIDPNARHCMASAVQGFMRTFGMDEPMGCYDDFEAADAFVLWGSNMAEMHPILWTRITDRRLSHPKTRVAVLSTFTHRSFDLADIPIIFTPQTDLAMLNYIANYIIQNNKVNKDFVNKHTVFKEGVTEIGYGLRPDHPLQKAAKNAANPGDSKPITFDDFAKFVSKYDADYVSKLSGVPKDKLRQLAELYADPNVKVMSLWTMGFNQHTRGSWVNNMVYNVHLLTGKIATPGNSPFSLTGQPSACGTAREVGTFSHRLPADMVVTNPKHREEAERIWKLPPGTIVEKPGYHAVLQNRMLRDGKLNAYWVQVNNNMQAAANIMEEALPGYRNPANFIVVSDAYPTVTALSADLILPSAMWVEKEGAYGNAERRTQFWHQLVDAPGDARSDLWQLMEFSKRFKVEEVWPAELVAKKPEYKGKTLFDVLYRNGQVDKFPIKEVSTEYHNAEAQAFGFYVQKGLFEEYASFGRGHGHDLAPFDRYHEERGLRWPVVNGKETRWRYREGSDPYVKAGTGFQFYGNPDGKAVIFALPYEPPPESPDKEYPFWLATGRVLEHWHSGSMTRRVPELYRAFPNAVVFMHPEDAKAMGLRRGVEVEVVSRRGRMRSRVETRGRDAPPRGLVFVPWFDASQLINKVTLDATCPISLQTDYKKCAVKIVKV.

Positions 1 to 29 (MKVSRRDFIKQTAIAATASVAGIPLGTEA) form a signal peptide, tat-type signal. One can recognise a 4Fe-4S Mo/W bis-MGD-type domain in the interval 41-97 (LKWSKAPCRFCGTGCGVTVAVRDNKVVATQGDPQCEVNKGLNCVKGYFLSKIMYGQD). Positions 48, 51, 55, and 83 each coordinate [4Fe-4S] cluster. Residues Lys85, Gln152, Asn177, Cys181, 214-221 (WGSNMAEM), 245-249 (STFTH), 264-266 (QTD), Met375, Gln379, Asn485, 511-512 (SD), Lys534, Asp561, and 721-730 (TGRVLEHWHS) contribute to the Mo-bis(molybdopterin guanine dinucleotide) site. Trp797 contacts substrate. Residues Asn805 and Lys822 each contribute to the Mo-bis(molybdopterin guanine dinucleotide) site.

Belongs to the prokaryotic molybdopterin-containing oxidoreductase family. NasA/NapA/NarB subfamily. Component of the periplasmic nitrate reductase NapAB complex composed of NapA and NapB. [4Fe-4S] cluster serves as cofactor. Mo-bis(molybdopterin guanine dinucleotide) is required as a cofactor. Predicted to be exported by the Tat system. The position of the signal peptide cleavage has not been experimentally proven.

The protein resides in the periplasm. The catalysed reaction is 2 Fe(II)-[cytochrome] + nitrate + 2 H(+) = 2 Fe(III)-[cytochrome] + nitrite + H2O. Catalytic subunit of the periplasmic nitrate reductase complex NapAB. Receives electrons from NapB and catalyzes the reduction of nitrate to nitrite. This chain is Periplasmic nitrate reductase, found in Cupriavidus pinatubonensis (strain JMP 134 / LMG 1197) (Cupriavidus necator (strain JMP 134)).